Consider the following 228-residue polypeptide: Eukaryotic translation initiation factor 4E-1 (228 aa).

EIF4G-binding regions lie at residues 53-56 (HLLE) and 63-99 (FDTPAAKSKQDDWGSSMRPIYTFSTVEEFWSIYNNIH). MRNA contacts are provided by residues 71 to 76 (KQDDWG), Lys103, and 121 to 122 (WE). Cys126 and Cys164 are disulfide-bonded. The EIF4G-binding stretch occupies residues 147–156 (YTLLAMIGEQ). MRNA-binding positions include 171-176 (RGRAEK) and 216-220 (RKLDR).

Belongs to the eukaryotic initiation factor 4E family. EIF4F is a multi-subunit complex, the composition of which varies with external and internal environmental conditions. It is composed of at least EIF4A, EIF4E and EIF4G. EIF4E is also known to interact with other partners. In higher plants two isoforms of EIF4F have been identified, named isoform EIF4F and isoform EIF(iso)4F. Isoform EIF4F has subunits p220 and p26, whereas isoform EIF(iso)4F has subunits p82 and p28. In terms of assembly, (Microbial infection) Interacts with potyvirus viral genome-linked protein (VPg); this interaction is possible in susceptible hosts but impaired in resistant plants. According to the redox status, the Cys-126-Cys-164 disulfide bridge may have a role in regulating protein function by affecting its ability to bind capped mRNA.

It localises to the nucleus. The protein resides in the cytoplasm. Its function is as follows. Component of the protein complex eIF4F, which is involved in the recognition of the mRNA cap, ATP-dependent unwinding of 5'-terminal secondary structure and recruitment of mRNA to the ribosome. Recognizes and binds the 7-methylguanosine-containing mRNA cap during an early step in the initiation of protein synthesis and facilitates ribosome binding by inducing the unwinding of the mRNAs secondary structures. Key component of recessive resistance to potyviruses. (Microbial infection) Susceptibility host factor required for viral infection by recruiting viral RNAs to the host ribosomal complex via an interaction with viral genome-linked protein (VPg). Also seems to be involved in virus movement from cell-to-cell. The sequence is that of Eukaryotic translation initiation factor 4E-1 from Pisum sativum (Garden pea).